Here is a 184-residue protein sequence, read N- to C-terminus: NADH-quinone oxidoreductase subunit B (184 aa).

Residues Cys37, Cys38, Cys103, and Cys132 each contribute to the [4Fe-4S] cluster site.

It belongs to the complex I 20 kDa subunit family. As to quaternary structure, NDH-1 is composed of 14 different subunits. Subunits NuoB, C, D, E, F, and G constitute the peripheral sector of the complex. The cofactor is [4Fe-4S] cluster.

The protein localises to the cell membrane. It carries out the reaction a quinone + NADH + 5 H(+)(in) = a quinol + NAD(+) + 4 H(+)(out). Its function is as follows. NDH-1 shuttles electrons from NADH, via FMN and iron-sulfur (Fe-S) centers, to quinones in the respiratory chain. The immediate electron acceptor for the enzyme in this species is believed to be a menaquinone. Couples the redox reaction to proton translocation (for every two electrons transferred, four hydrogen ions are translocated across the cytoplasmic membrane), and thus conserves the redox energy in a proton gradient. The sequence is that of NADH-quinone oxidoreductase subunit B from Mycolicibacterium paratuberculosis (strain ATCC BAA-968 / K-10) (Mycobacterium paratuberculosis).